We begin with the raw amino-acid sequence, 236 residues long: Flagellar L-ring protein (236 aa).

A signal peptide spans Met-1 to Ala-24. The N-palmitoyl cysteine moiety is linked to residue Cys-25. Cys-25 is lipidated: S-diacylglycerol cysteine.

It belongs to the FlgH family. The basal body constitutes a major portion of the flagellar organelle and consists of four rings (L,P,S, and M) mounted on a central rod.

It is found in the cell outer membrane. It localises to the bacterial flagellum basal body. Assembles around the rod to form the L-ring and probably protects the motor/basal body from shearing forces during rotation. In Colwellia psychrerythraea (strain 34H / ATCC BAA-681) (Vibrio psychroerythus), this protein is Flagellar L-ring protein.